The sequence spans 65 residues: Large ribosomal subunit protein bL35 (65 aa).

It belongs to the bacterial ribosomal protein bL35 family.

This is Large ribosomal subunit protein bL35 from Polynucleobacter asymbioticus (strain DSM 18221 / CIP 109841 / QLW-P1DMWA-1) (Polynucleobacter necessarius subsp. asymbioticus).